The following is a 316-amino-acid chain: Methionyl-tRNA formyltransferase (316 aa).

113 to 116 (SLLP) contributes to the (6S)-5,6,7,8-tetrahydrofolate binding site.

Belongs to the Fmt family.

It carries out the reaction L-methionyl-tRNA(fMet) + (6R)-10-formyltetrahydrofolate = N-formyl-L-methionyl-tRNA(fMet) + (6S)-5,6,7,8-tetrahydrofolate + H(+). In terms of biological role, attaches a formyl group to the free amino group of methionyl-tRNA(fMet). The formyl group appears to play a dual role in the initiator identity of N-formylmethionyl-tRNA by promoting its recognition by IF2 and preventing the misappropriation of this tRNA by the elongation apparatus. This chain is Methionyl-tRNA formyltransferase, found in Sodalis glossinidius (strain morsitans).